Reading from the N-terminus, the 276-residue chain is MLPCRRLVLSCKNQAASFLRRCGPSKRIQSVNYCKSTRQGHEIPDVKPLFPTGGGTQAPSRSRARYAVPAILLGFAGFVGFLHYNDERRAVPRGQASSNSGCGCGSNTTVKGPIIGGPFTLVSTENKIVTENDFCGKWVLLYFGYSFSPDVGPEQLKMMSKAVDKLESKHNEKILPVFVTLDPQRDTPSHLHAYLKEFDSRILGLTGTASAMRQMAQEYRVYFKKVQEDGEDYLVDTSHNMYLINPKMEIVRCFGVEYNPDELSQELLKEVASVSQ.

A mitochondrion-targeting transit peptide spans 1–14 (MLPCRRLVLSCKNQ). Residues 66–82 (YAVPAILLGFAGFVGFL) form a helical membrane-spanning segment. The region spanning 110–273 (VKGPIIGGPF…SQELLKEVAS (164 aa)) is the Thioredoxin domain.

Belongs to the SCO1/2 family. In terms of tissue distribution, expressed in the whole plant with highest expression in imbibed seeds and embryos, and the root hair zone.

It is found in the mitochondrion inner membrane. Its function is as follows. Thought to play a role in cellular copper homeostasis, mitochondrial redox signaling or insertion of copper into the active site of COX. Participates in copper and redox homeostasis. This is Protein SCO1 homolog 2, mitochondrial (HCC2) from Arabidopsis thaliana (Mouse-ear cress).